The chain runs to 636 residues: Biosynthetic arginine decarboxylase (636 aa).

Lysine 101 carries the post-translational modification N6-(pyridoxal phosphate)lysine. Substrate is bound at residue 286-296 (FDVGGGLAVDY).

Belongs to the Orn/Lys/Arg decarboxylase class-II family. SpeA subfamily. Mg(2+) is required as a cofactor. Requires pyridoxal 5'-phosphate as cofactor.

The catalysed reaction is L-arginine + H(+) = agmatine + CO2. It participates in amine and polyamine biosynthesis; agmatine biosynthesis; agmatine from L-arginine: step 1/1. In terms of biological role, catalyzes the biosynthesis of agmatine from arginine. This Shewanella denitrificans (strain OS217 / ATCC BAA-1090 / DSM 15013) protein is Biosynthetic arginine decarboxylase.